A 523-amino-acid polypeptide reads, in one-letter code: Coatomer subunit delta-2 (523 aa).

A disordered region spans residues aspartate 218 to leucine 243. An MHD domain is found at serine 282–valine 523.

This sequence belongs to the adaptor complexes medium subunit family. Delta-COP subfamily. As to quaternary structure, oligomeric complex that consists of at least the alpha, beta, beta', gamma, delta, epsilon and zeta subunits.

The protein localises to the cytoplasm. Its subcellular location is the golgi apparatus membrane. It is found in the cytoplasmic vesicle. The protein resides in the COPI-coated vesicle membrane. In terms of biological role, the coatomer is a cytosolic protein complex that binds to dilysine motifs and reversibly associates with Golgi non-clathrin-coated vesicles, which further mediate biosynthetic protein transport from the ER, via the Golgi up to the trans Golgi network. Coatomer complex is required for budding from Golgi membranes, and is essential for the retrograde Golgi-to-ER transport of dilysine-tagged proteins. The sequence is that of Coatomer subunit delta-2 from Oryza sativa subsp. japonica (Rice).